The sequence spans 365 residues: Protein SGT1 homolog (365 aa).

An N-acetylalanine modification is found at Ala2. TPR repeat units lie at residues 11–44 (SQRF…KPDD), 45–78 (AQYY…NPNN), and 79–112 (STAM…DIET). One can recognise a CS domain in the interval 169-258 (QSKIKYDWYQ…PEAVRWEKLE (90 aa)). The residue at position 265 (Thr265) is a Phosphothreonine. The region spanning 276-365 (LYPSSSPYTR…PPDDMEWKKY (90 aa)) is the SGS domain. Residue Ser281 is modified to Phosphoserine. The residue at position 284 (Thr284) is a Phosphothreonine. Lys295 is covalently cross-linked (Glycyl lysine isopeptide (Lys-Gly) (interchain with G-Cter in SUMO1); alternate). Lys295 is covalently cross-linked (Glycyl lysine isopeptide (Lys-Gly) (interchain with G-Cter in SUMO2); alternate). Ser331 is modified (phosphoserine).

This sequence belongs to the SGT1 family. As to quaternary structure, probably associates with SCF (SKP1-CUL1-F-box protein) complex through interaction with SKP1. Interacts with S100A6. Interacts with HSP90. Post-translationally, phosphorylated at Ser-281 and Ser-331, dephosphorylation promotes nuclear translocation, most likely due to disruption of the SUGT1-HSP90 complex.

It localises to the cytoplasm. The protein resides in the nucleus. Its function is as follows. May play a role in ubiquitination and subsequent proteasomal degradation of target proteins. The sequence is that of Protein SGT1 homolog from Homo sapiens (Human).